A 443-amino-acid chain; its full sequence is DNA double-strand break repair protein Mre11 (443 aa).

Aspartate 8, histidine 10, aspartate 49, and asparagine 84 together coordinate Mn(2+). Histidine 85 functions as the Proton donor in the catalytic mechanism. Residues histidine 169, histidine 201, and histidine 203 each contribute to the Mn(2+) site. The interval 382–429 (QEEGAEERVVEEETEKKVEEQFKGDEEADEAERRAEETEKAKSTKKAR) is disordered. A compositionally biased stretch (basic and acidic residues) spans 395-423 (TEKKVEEQFKGDEEADEAERRAEETEKAK).

It belongs to the MRE11/RAD32 family. Homodimer. Forms a heterotetramer composed of two Mre11 subunits and two Rad50 subunits. It depends on Mn(2+) as a cofactor.

Its activity is regulated as follows. Nuclease activity is regulated by Rad50. In terms of biological role, part of the Rad50/Mre11 complex, which is involved in the early steps of DNA double-strand break (DSB) repair. The complex may facilitate opening of the processed DNA ends to aid in the recruitment of HerA and NurA. Mre11 binds to DSB ends and has both double-stranded 3'-5' exonuclease activity and single-stranded endonuclease activity. This is DNA double-strand break repair protein Mre11 from Archaeoglobus fulgidus (strain ATCC 49558 / DSM 4304 / JCM 9628 / NBRC 100126 / VC-16).